A 277-amino-acid polypeptide reads, in one-letter code: Large ribosomal subunit protein uL2 (277 aa).

Disordered stretches follow at residues 37 to 58 (LHSKGGRNVHGRITTRHQGGGH) and 222 to 277 (GVAM…NRRR). The span at 268-277 (VRRRKQNRRR) shows a compositional bias: basic residues.

This sequence belongs to the universal ribosomal protein uL2 family. As to quaternary structure, part of the 50S ribosomal subunit. Forms a bridge to the 30S subunit in the 70S ribosome.

Functionally, one of the primary rRNA binding proteins. Required for association of the 30S and 50S subunits to form the 70S ribosome, for tRNA binding and peptide bond formation. It has been suggested to have peptidyltransferase activity; this is somewhat controversial. Makes several contacts with the 16S rRNA in the 70S ribosome. This chain is Large ribosomal subunit protein uL2, found in Parafrankia sp. (strain EAN1pec).